A 315-amino-acid polypeptide reads, in one-letter code: HTH-type transcriptional regulator TreR (315 aa).

An HTH lacI-type domain is found at 5 to 59 (LTIKDIARLSGVGKSTVSRVLNNESGVSQLTRERVEAVMNQHGFSPSRSARAMRG). Residues 7–26 (IKDIARLSGVGKSTVSRVLN) constitute a DNA-binding region (H-T-H motif). Alpha,alpha-trehalose 6-phosphate is bound by residues 71 to 77 (RLDSLSE), Gly-126, Arg-147, 187 to 190 (DVTT), Arg-194, Thr-242, and Tyr-284.

In terms of assembly, homodimer.

In terms of biological role, repressor of the treBC operon. It is able to bind trehalose-6-phosphate and trehalose. The protein is HTH-type transcriptional regulator TreR (treR) of Escherichia coli (strain K12).